The sequence spans 36 residues: uncharacterized protein (36 aa).

This is an uncharacterized protein from Spiroplasma melliferum (SpV1).